Reading from the N-terminus, the 608-residue chain is Elongation factor 4 (608 aa).

The tr-type G domain occupies 11 to 193 (KKIRNFSIIA…QIVEKVPEPS (183 aa)). Residues 23 to 28 (DHGKST) and 140 to 143 (NKID) contribute to the GTP site.

This sequence belongs to the TRAFAC class translation factor GTPase superfamily. Classic translation factor GTPase family. LepA subfamily.

Its subcellular location is the cell membrane. It carries out the reaction GTP + H2O = GDP + phosphate + H(+). Its function is as follows. Required for accurate and efficient protein synthesis under certain stress conditions. May act as a fidelity factor of the translation reaction, by catalyzing a one-codon backward translocation of tRNAs on improperly translocated ribosomes. Back-translocation proceeds from a post-translocation (POST) complex to a pre-translocation (PRE) complex, thus giving elongation factor G a second chance to translocate the tRNAs correctly. Binds to ribosomes in a GTP-dependent manner. This Listeria monocytogenes serotype 4b (strain CLIP80459) protein is Elongation factor 4.